Here is a 103-residue protein sequence, read N- to C-terminus: Large ribosomal subunit protein bL21 (103 aa).

This sequence belongs to the bacterial ribosomal protein bL21 family. Part of the 50S ribosomal subunit. Contacts protein L20.

Functionally, this protein binds to 23S rRNA in the presence of protein L20. The chain is Large ribosomal subunit protein bL21 from Hamiltonella defensa subsp. Acyrthosiphon pisum (strain 5AT).